The chain runs to 248 residues: MALLEICCYSMECALTAQRNGADRIELCAAPKEGGLTPSFGVLRSVREHITIPIHPIIRPRGGDFYYTDGEFAAMLEDIRLVRELGFPGLVTGVLTVDGDVDMSRMEKIMAAAGPLAVTFHRAFDMCANPFNALKNLADAGVARVLTSGQKADAAQGLSIIMELIAQGDAPIIMAGAGVRANNLQNFLDAGVREVHSSAGVLLPSPMRYRNQGLSMSADIQADEYSRYRVEGAAVAEMKGIIVRHQAK.

Belongs to the CutC family. In terms of assembly, homodimer.

The protein localises to the cytoplasm. This Salmonella newport (strain SL254) protein is PF03932 family protein CutC.